The sequence spans 540 residues: Thiamine biosynthetic bifunctional enzyme (540 aa).

Residues 1–238 (MVFTKEEVDY…LDATRYQFVE (238 aa)) form a thiamine-phosphate synthase region. 4-amino-2-methyl-5-(diphosphooxymethyl)pyrimidine is bound by residues 43 to 47 (QIREK) and asparagine 75. Residues aspartate 76 and aspartate 95 each coordinate Mg(2+). Serine 114 provides a ligand contact to 4-amino-2-methyl-5-(diphosphooxymethyl)pyrimidine. A 2-[(2R,5Z)-2-carboxy-4-methylthiazol-5(2H)-ylidene]ethyl phosphate-binding site is contributed by 143–145 (TST). Residue lysine 146 participates in 4-amino-2-methyl-5-(diphosphooxymethyl)pyrimidine binding. Residues glycine 181 and 209 to 210 (VS) each bind 2-[(2R,5Z)-2-carboxy-4-methylthiazol-5(2H)-ylidene]ethyl phosphate. The segment at 239–540 (CELNNTFPTT…KWSASLKKFK (302 aa)) is hydroxyethylthiazole kinase. A 5-(2-hydroxyethyl)-4-methylthiazole-binding site is contributed by methionine 290. 2 residues coordinate ATP: lysine 365 and threonine 415. Alanine 462 lines the 5-(2-hydroxyethyl)-4-methylthiazole pocket. The active-site Proton acceptor; for hydroxyethylthiazole kinase activity is the cysteine 465.

The protein in the N-terminal section; belongs to the thiamine-phosphate synthase family. This sequence in the C-terminal section; belongs to the Thz kinase family. In terms of assembly, homooctamer. Mg(2+) serves as cofactor.

The enzyme catalyses 2-[(2R,5Z)-2-carboxy-4-methylthiazol-5(2H)-ylidene]ethyl phosphate + 4-amino-2-methyl-5-(diphosphooxymethyl)pyrimidine + 2 H(+) = thiamine phosphate + CO2 + diphosphate. It carries out the reaction 2-(2-carboxy-4-methylthiazol-5-yl)ethyl phosphate + 4-amino-2-methyl-5-(diphosphooxymethyl)pyrimidine + 2 H(+) = thiamine phosphate + CO2 + diphosphate. It catalyses the reaction 4-methyl-5-(2-phosphooxyethyl)-thiazole + 4-amino-2-methyl-5-(diphosphooxymethyl)pyrimidine + H(+) = thiamine phosphate + diphosphate. The catalysed reaction is 5-(2-hydroxyethyl)-4-methylthiazole + ATP = 4-methyl-5-(2-phosphooxyethyl)-thiazole + ADP + H(+). The protein operates within cofactor biosynthesis; thiamine diphosphate biosynthesis; 4-methyl-5-(2-phosphoethyl)-thiazole from 5-(2-hydroxyethyl)-4-methylthiazole: step 1/1. It functions in the pathway cofactor biosynthesis; thiamine diphosphate biosynthesis; thiamine phosphate from 4-amino-2-methyl-5-diphosphomethylpyrimidine and 4-methyl-5-(2-phosphoethyl)-thiazole: step 1/1. Essential for thiamine biosynthesis. The kinase activity is involved in the salvage synthesis of TH-P from the thiazole. In terms of biological role, condenses 4-methyl-5-(beta-hydroxyethyl)thiazole monophosphate (THZ-P) and 2-methyl-4-amino-5-hydroxymethyl pyrimidine pyrophosphate (HMP-PP) to form thiamine monophosphate (TMP). This is Thiamine biosynthetic bifunctional enzyme (THI6) from Saccharomyces cerevisiae (strain ATCC 204508 / S288c) (Baker's yeast).